The chain runs to 545 residues: E3 ubiquitin-protein ligase ipaH9.8 (545 aa).

The interval 1 to 242 (MLPINNNFSL…YHGPRIYFSM (242 aa)) is interaction with target proteins. LRR repeat units follow at residues 57–77 (NSDE…NLPA), 78–99 (QITL…PVTL), 100–117 (KKLY…VLPP), 118–139 (ALES…PDSL), 140–157 (LTMN…SLPQ), 158–179 (ALKN…SEGN), 182–203 (VVRE…ILNL), and 205–228 (NECS…QRLT). Positions 243 to 250 (SDGQQNTL) are linker. The interval 251 to 545 (HRPLADAVTA…SENGSQLHHS (295 aa)) is E3 ubiquitin-protein ligase catalytic domain. In terms of domain architecture, NEL spans 253-545 (PLADAVTAWF…SENGSQLHHS (293 aa)). The active-site Glycyl thioester intermediate is the C337.

It belongs to the LRR-containing bacterial E3 ligase family. As to quaternary structure, also interacts with human and mouse U2AF1 (U2AF35). Post-translationally, ubiquitinated in the presence of host E1 ubiquitin-activating enzyme, E2 ubiquitin-conjugating enzyme and ubiquitin.

It is found in the secreted. It localises to the host cytoplasm. The protein localises to the host nucleus. The enzyme catalyses S-ubiquitinyl-[E2 ubiquitin-conjugating enzyme]-L-cysteine + [acceptor protein]-L-lysine = [E2 ubiquitin-conjugating enzyme]-L-cysteine + N(6)-ubiquitinyl-[acceptor protein]-L-lysine.. Exists in an autoinhibited state in the absence of substrate protein, due to interactions of the leucine-rich repeats with NEL domain. Is activated upon binding to a substrate protein. Its function is as follows. Effector E3 ubiquitin ligase that interferes with host's ubiquitination pathway and modulates the acute inflammatory responses, thus facilitating bacterial colonization within the host cell. Interacts with IKBKG (NEMO) and TNIP1 (ABIN-1), a ubiquitin-binding adapter protein, which results in TNIP1-dependent 'Lys-27'-linked polyubiquitination of IKBKG. Consequently, polyubiquitinated IKBKG undergoes proteasome-dependent degradation, which perturbs NF-kappa-B activation during bacterial infection. Mediates polyubiquitination of host U2AF1, leading to its proteasomal degradation. Catalyzes 'Lys-48'-linked polyubiquitination and subsequent degradation of a subset of host guanylate-binding proteins (GBP1, GBP2, GBP4 and GBP6), thereby suppressing host cell defense. In contrast, host GBP3 and GBP7 are not ubiquitinated by IpaH9.8. Uses UBE2D2 (UBCH5B) as an E2 ubiquitin-conjugating enzyme. The chain is E3 ubiquitin-protein ligase ipaH9.8 (ipaH9.8) from Shigella boydii serotype 18 (strain CDC 3083-94 / BS512).